The chain runs to 33 residues: MPRRRRSSSRPVRRRRRPRVSRRRRRRGRRRRR.

Residues 1 to 33 (MPRRRRSSSRPVRRRRRPRVSRRRRRRGRRRRR) form a disordered region.

Testis.

It localises to the nucleus. It is found in the chromosome. Functionally, protamines substitute for histones in the chromatin of sperm during the haploid phase of spermatogenesis. They compact sperm DNA into a highly condensed, stable and inactive complex. The chain is Protamine TP17 from Oncorhynchus mykiss (Rainbow trout).